A 140-amino-acid chain; its full sequence is Nucleoside diphosphate kinase (140 aa).

ATP contacts are provided by K11, F59, R87, T93, R104, and N114. H117 (pros-phosphohistidine intermediate) is an active-site residue.

This sequence belongs to the NDK family. As to quaternary structure, homotetramer. Mg(2+) serves as cofactor.

It is found in the cytoplasm. The enzyme catalyses a 2'-deoxyribonucleoside 5'-diphosphate + ATP = a 2'-deoxyribonucleoside 5'-triphosphate + ADP. It catalyses the reaction a ribonucleoside 5'-diphosphate + ATP = a ribonucleoside 5'-triphosphate + ADP. In terms of biological role, major role in the synthesis of nucleoside triphosphates other than ATP. The ATP gamma phosphate is transferred to the NDP beta phosphate via a ping-pong mechanism, using a phosphorylated active-site intermediate. In Methylorubrum extorquens (strain CM4 / NCIMB 13688) (Methylobacterium extorquens), this protein is Nucleoside diphosphate kinase.